The following is a 469-amino-acid chain: Cell division protein FtsP (469 aa).

Positions 1-27 (MKLSRRQFLQRSTLAGVATVTPTSLWA) form a signal peptide, tat-type signal.

It belongs to the FtsP family. In terms of processing, predicted to be exported by the Tat system. The position of the signal peptide cleavage has not been experimentally proven.

It is found in the periplasm. Cell division protein that is required for growth during stress conditions. May be involved in protecting or stabilizing the divisomal assembly under conditions of stress. This chain is Cell division protein FtsP, found in Glaesserella parasuis serovar 5 (strain SH0165) (Haemophilus parasuis).